Consider the following 107-residue polypeptide: Phosphoribosyl-ATP pyrophosphatase (107 aa).

The protein belongs to the PRA-PH family.

The protein localises to the cytoplasm. It carries out the reaction 1-(5-phospho-beta-D-ribosyl)-ATP + H2O = 1-(5-phospho-beta-D-ribosyl)-5'-AMP + diphosphate + H(+). It participates in amino-acid biosynthesis; L-histidine biosynthesis; L-histidine from 5-phospho-alpha-D-ribose 1-diphosphate: step 2/9. In Rhizobium etli (strain CIAT 652), this protein is Phosphoribosyl-ATP pyrophosphatase.